Here is a 315-residue protein sequence, read N- to C-terminus: Aspartate carbamoyltransferase catalytic subunit (315 aa).

Carbamoyl phosphate is bound by residues R65 and T66. Residue K93 coordinates L-aspartate. The carbamoyl phosphate site is built by R115, H145, and Q148. 2 residues coordinate L-aspartate: R179 and R234. 2 residues coordinate carbamoyl phosphate: G275 and P276.

The protein belongs to the aspartate/ornithine carbamoyltransferase superfamily. ATCase family. As to quaternary structure, heterododecamer (2C3:3R2) of six catalytic PyrB chains organized as two trimers (C3), and six regulatory PyrI chains organized as three dimers (R2).

It catalyses the reaction carbamoyl phosphate + L-aspartate = N-carbamoyl-L-aspartate + phosphate + H(+). It participates in pyrimidine metabolism; UMP biosynthesis via de novo pathway; (S)-dihydroorotate from bicarbonate: step 2/3. Its function is as follows. Catalyzes the condensation of carbamoyl phosphate and aspartate to form carbamoyl aspartate and inorganic phosphate, the committed step in the de novo pyrimidine nucleotide biosynthesis pathway. In Xanthomonas oryzae pv. oryzae (strain MAFF 311018), this protein is Aspartate carbamoyltransferase catalytic subunit.